Consider the following 218-residue polypeptide: Acetoacetyl-CoA:acetate/butyrate CoA transferase alpha subunit (218 aa).

24 to 30 provides a ligand contact to CoA; it reads GGFLNCG.

It belongs to the 3-oxoacid CoA-transferase subunit A family. Heterotetramer composed of two alpha subunits (CtfA) and two beta subunits (CtfB).

The catalysed reaction is acetoacetate + butanoyl-CoA = acetoacetyl-CoA + butanoate. The enzyme catalyses acetoacetate + acetyl-CoA = acetoacetyl-CoA + acetate. The acetate and butyrate conversion reactions are inhibited in vitro by physiological levels of acetone and butanol. Functionally, catalyzes the transfer of CoA from acetoacetyl-CoA to acetate, butyrate and propionate. Also shows low activity with valerate, isobutyrate and crotonate. Plays an important role in the metabolic shift between the acid-producing and solvent-forming states of C.acetobutylicum. Acts mainly to detoxify the medium by removing the acetate and butyrate excreted earlier in the fermentation. This Clostridium acetobutylicum (strain ATCC 824 / DSM 792 / JCM 1419 / IAM 19013 / LMG 5710 / NBRC 13948 / NRRL B-527 / VKM B-1787 / 2291 / W) protein is Acetoacetyl-CoA:acetate/butyrate CoA transferase alpha subunit.